A 95-amino-acid polypeptide reads, in one-letter code: MDMRKLNTSQGRNLTTVDDRRRFSIGWETWDDGGESLYDVTNNGTTVINTTACVSSCSHTSLVLCNMTQQTDSLYGVGHRLNDEEDGELWRVSVS.

This chain is Protein RL5A (RL5A), found in Homo sapiens (Human).